A 568-amino-acid chain; its full sequence is 2-succinyl-5-enolpyruvyl-6-hydroxy-3-cyclohexene-1-carboxylate synthase (568 aa).

The protein belongs to the TPP enzyme family. MenD subfamily. Homodimer. Mg(2+) serves as cofactor. Mn(2+) is required as a cofactor. The cofactor is thiamine diphosphate.

It carries out the reaction isochorismate + 2-oxoglutarate + H(+) = 5-enolpyruvoyl-6-hydroxy-2-succinyl-cyclohex-3-ene-1-carboxylate + CO2. It functions in the pathway quinol/quinone metabolism; 1,4-dihydroxy-2-naphthoate biosynthesis; 1,4-dihydroxy-2-naphthoate from chorismate: step 2/7. The protein operates within quinol/quinone metabolism; menaquinone biosynthesis. Catalyzes the thiamine diphosphate-dependent decarboxylation of 2-oxoglutarate and the subsequent addition of the resulting succinic semialdehyde-thiamine pyrophosphate anion to isochorismate to yield 2-succinyl-5-enolpyruvyl-6-hydroxy-3-cyclohexene-1-carboxylate (SEPHCHC). This is 2-succinyl-5-enolpyruvyl-6-hydroxy-3-cyclohexene-1-carboxylate synthase from Pasteurella multocida (strain Pm70).